The sequence spans 658 residues: MNTEATDSQLSVLIKKEKIVPDSQEVDGNTTRELGDNTLDEIINGQFSPLMSQNSENELEKHLRSTPGIEGVFESLLHNEIQEPDITHLSLMSTHPSESGRQPELIKTRTRTPRIVNDGPLQQTSRSELLDLNALFDTEESALMNQSIESETTLTQFLGGSQPIDYLRERTKEEQDKRNQMRQEEKLIKKMQKAQVEKARSEMFSERNHEFEPMECDNDEEDVFRAVKEDSSNREKEEEWLTFEVKKERASKVSDFEFETVVNDGIYLWAKMKCNIPFIVKWNVSSCHKQLFLKVRLVNYMASDNIENSIRVPSNLAKCHNHRMTEEKTPRESFFYVVKSGEHWTPQINSKKDQCFVAKLAPGTTQVLFDLIFKCQRSCLDLAERRKRMCLAVFLEDENGNELLHDVIKQLLIVGYPRRDWKNFCEKRGDFKFSEKSLLVQTTNNIFADQSSLHSGPSSPEKVTDTSQMFQSTSSSSRKRAASDVKFVASAVPSSDQQSYPMRLHGCESRRMEMSFYRKFKENEDSLSNKRPRSQYGLQRQVKLSEKEYSKFVAFFAKEGENEISKYASAHCLTPAQASRLDPSDKIEKFLAFVGDESAADNFRKHGLFTMLDLDKYFQVYDSAFETIGVDSSKMEKYYDLFLHYHRVQENIRYNQPK.

A DNA-binding region spans residues 238–428 (EEWLTFEVKK…RDWKNFCEKR (191 aa)). 4 residues coordinate Zn(2+): C319, H322, C375, and C379. The tract at residues 450 to 477 (QSSLHSGPSSPEKVTDTSQMFQSTSSSS) is disordered. The segment covering 466–476 (TSQMFQSTSSS) has biased composition (low complexity). Positions 535–564 (QYGLQRQVKLSEKEYSKFVAFFAKEGENEI) are required for tertiary structure stability of the protein.

Belongs to the p53 family. Homodimer. Interacts (via C-terminus domain) with prmt-5; not methylated by prmt-5. Interacts with cbp-1 (via HAT domain); cep-1 transcriptional activity may be inhibited by interaction with methylated cbp-1. Component of a complex that contains prmt-5 and cbp-1. Interacts with ape-1; the interaction inhibits pro-apoptotic activity of cep-1. Requires Zn(2+) as cofactor. Post-translationally, phosphorylated in response to IR-induced DNA damage which is thought to be mediated by akt-1.

The protein resides in the nucleus. In terms of biological role, transcriptional activator that binds the same DNA consensus sequence as p53. Has a role in normal development to ensure proper meiotic chromosome segregation. Promotes apoptosis under conditions of cellular and genotoxic stress in response to DNA damage, hypoxia, or starvation. However, not required for DNA repair in response to UV-C or to regulate cell-cycle progression. Regulates germline apoptosis in response to DNA damage. Required for induction of ced-13 in response to DNA damage. Its pro-apoptotic activity is inhibited when bound to ape-1 in vitro. Regulates germline proliferation by activating phg-1. Regulates DNA damage-induced apoptosis by inducing transcription of the programmed cell death activator egl-1. Negatively regulates lifespan. The polypeptide is Transcription factor cep-1 (Caenorhabditis briggsae).